The chain runs to 616 residues: Glycogenin-1 (616 aa).

UDP is bound by residues Leu-10, Tyr-16, and Arg-95. Positions 10, 16, 95, 104, 120, 122, 158, 159, 185, 188, and 189 each coordinate UDP-alpha-D-glucose. Residues Asp-120 and Asp-122 each coordinate UDP. Mn(2+) is bound by residues Asp-120 and Asp-122. A glycan (O-linked (Glc...) tyrosine) is linked at Tyr-230. UDP contacts are provided by His-247, Gly-250, and Lys-253. His-247 contributes to the Mn(2+) binding site. Gly-250 and Lys-253 together coordinate UDP-alpha-D-glucose. The segment covering 283-302 has biased composition (basic and acidic residues); it reads HQLNNEVSKPKISDSDKTET. 4 disordered regions span residues 283–320, 335–354, 371–525, and 553–588; these read HQLNNEVSKPKISDSDKTETPETITPVDAPPSNEPTTN, NQNAEPVPNSDHSPAPNPVP, TNQP…EKDK, and RDATEGETKTSAVADKQEDMKLTAEETNQPQQEMPN. Positions 377-386 are enriched in basic and acidic residues; sequence ESREYSKEND. The segment covering 400 to 419 has biased composition (polar residues); it reads SPPNSTQELNSSYSVVSTQA. The span at 450–461 shows a compositional bias: low complexity; it reads STAASSNNNVSN. Polar residues-rich tracts occupy residues 462-485 and 492-503; these read QPDGKNFSNSKENNISVESSPSNP and DNIQKPSVSTND. Positions 567-576 are enriched in basic and acidic residues; it reads DKQEDMKLTA. Positions 577–586 are enriched in polar residues; it reads EETNQPQQEM. Residue Tyr-598 is glycosylated (O-linked (Glc...) tyrosine).

Belongs to the glycosyltransferase 8 family. Glycogenin subfamily. The cofactor is Mn(2+).

The protein resides in the cytoplasm. Its subcellular location is the vacuole. It catalyses the reaction L-tyrosyl-[glycogenin] + UDP-alpha-D-glucose = alpha-D-glucosyl-L-tyrosyl-[glycogenin] + UDP + H(+). The catalysed reaction is [1,4-alpha-D-glucosyl](n)-L-tyrosyl-[glycogenin] + UDP-alpha-D-glucose = [1,4-alpha-D-glucosyl](n+1)-L-tyrosyl-[glycogenin] + UDP + H(+). In terms of biological role, self-glucosylating initiator of glycogen synthesis. It catalyzes the formation of a short alpha (1,4)-glucosyl chain covalently attached via a glucose 1-O-tyrosyl linkage to internal tyrosine residues and these chains act as primers for the elongation reaction catalyzed by glycogen synthase. Capable of transferring glucosyl residues to unbound acceptors such as free oligoglucans or oligoglucan derivatives. This Saccharomyces cerevisiae (strain ATCC 204508 / S288c) (Baker's yeast) protein is Glycogenin-1.